Consider the following 252-residue polypeptide: Major prion protein (252 aa).

Residues 1–28 form the signal peptide; the sequence is MAHLGYWMLLLFVATWSDVGLCKKRPKP. Positions 23–229 are interaction with GRB2, ERI3 and SYN1; sequence KKRPKPGGGW…ESQAAYQRAA (207 aa). A disordered region spans residues 26–109; the sequence is PKPGGGWNTG…KPSKPKTSMK (84 aa). Repeat copies occupy residues 51 to 59, 60 to 67, 68 to 75, 76 to 83, and 84 to 92. The segment at 51–92 is 5 X 8 AA tandem repeats of P-H-G-G-G-W-G-Q; the sequence is PPQGGGWGQPHGGGWGQPHGGGWGQPHGGGWGQPHGGGWGQG. Positions 53 to 93 are enriched in gly residues; that stretch reads QGGGWGQPHGGGWGQPHGGGWGQPHGGGWGQPHGGGWGQGG. Positions 61, 62, 63, 69, 70, 71, 77, 78, 79, 85, 86, and 87 each coordinate Cu(2+). Cys178 and Cys213 are oxidised to a cystine. N-linked (GlcNAc...) asparagine glycans are attached at residues Asn180 and Asn196. Ala229 carries the GPI-anchor amidated alanine lipid modification. Residues 230–252 constitute a propeptide, removed in mature form; sequence GVLLFSSPPVILLISFLIFLIVG.

Belongs to the prion family. As to quaternary structure, monomer and homodimer. Has a tendency to aggregate into amyloid fibrils containing a cross-beta spine, formed by a steric zipper of superposed beta-strands. Soluble oligomers may represent an intermediate stage on the path to fibril formation. Copper binding may promote oligomerization. Interacts with GRB2, APP, ERI3/PRNPIP and SYN1. Mislocalized cytosolically exposed PrP interacts with MGRN1; this interaction alters MGRN1 subcellular location and causes lysosomal enlargement. Interacts with KIAA1191.

It is found in the cell membrane. The protein localises to the golgi apparatus. Its primary physiological function is unclear. Has cytoprotective activity against internal or environmental stresses. May play a role in neuronal development and synaptic plasticity. May be required for neuronal myelin sheath maintenance. May play a role in iron uptake and iron homeostasis. Soluble oligomers are toxic to cultured neuroblastoma cells and induce apoptosis (in vitro). Association with GPC1 (via its heparan sulfate chains) targets PRNP to lipid rafts. Also provides Cu(2+) or Zn(2+) for the ascorbate-mediated GPC1 deaminase degradation of its heparan sulfate side chains. The sequence is that of Major prion protein (PRNP) from Oryctolagus cuniculus (Rabbit).